Reading from the N-terminus, the 458-residue chain is UDP-N-acetylglucosamine 1-carboxyvinyltransferase (458 aa).

A phosphoenolpyruvate-binding site is contributed by 34–35 (KN). Arg-104 is a UDP-N-acetyl-alpha-D-glucosamine binding site. The Proton donor role is filled by Cys-128. Cys-128 is subject to 2-(S-cysteinyl)pyruvic acid O-phosphothioketal. 2 residues coordinate UDP-N-acetyl-alpha-D-glucosamine: Asp-320 and Val-342.

Belongs to the EPSP synthase family. MurA subfamily.

The protein localises to the cytoplasm. It catalyses the reaction phosphoenolpyruvate + UDP-N-acetyl-alpha-D-glucosamine = UDP-N-acetyl-3-O-(1-carboxyvinyl)-alpha-D-glucosamine + phosphate. Its pathway is cell wall biogenesis; peptidoglycan biosynthesis. Its function is as follows. Cell wall formation. Adds enolpyruvyl to UDP-N-acetylglucosamine. The chain is UDP-N-acetylglucosamine 1-carboxyvinyltransferase from Prochlorococcus marinus (strain NATL1A).